We begin with the raw amino-acid sequence, 583 residues long: Glucosidase 2 subunit beta (583 aa).

The N-terminal stretch at 1–26 is a signal peptide; sequence MVRLNLAVVALAAGALSASASASSSA. An intrachain disulfide couples Cys91 to Cys115. Residues 130 to 252 are a coiled coil; it reads NRCEKVGKEY…LTLLLDDLAK (123 aa). In terms of domain architecture, MRH spans 455 to 562; it reads NKCFSKDMGE…KVATPAVCFP (108 aa). Intrachain disulfides connect Cys457–Cys470, Cys519–Cys548, and Cys533–Cys560. The short motif at 580–583 is the Prevents secretion from ER element; that stretch reads KDEL.

Heterodimer of a catalytic subunit alpha and a subunit beta.

The protein resides in the endoplasmic reticulum. Functionally, subunit of glucosidase 2, which cleaves sequentially the 2 innermost alpha-1,3-linked glucose residues from the Glc(2)Man(9)GlcNAc(2) oligosaccharide precursor of immature glycoproteins in the endoplasmic reticulum (ER). Specifically required for the cleavage of the final glucose. The subunit beta retains the catalytic subunit alpha in the ER. The sequence is that of Glucosidase 2 subunit beta from Mycosarcoma maydis (Corn smut fungus).